Reading from the N-terminus, the 341-residue chain is tRNA N6-adenosine threonylcarbamoyltransferase (341 aa).

Positions 111 and 115 each coordinate Fe cation. Substrate-binding positions include L134 to G138, D167, G180, and N276. D304 lines the Fe cation pocket.

It belongs to the KAE1 / TsaD family. The cofactor is Fe(2+).

The protein resides in the cytoplasm. It carries out the reaction L-threonylcarbamoyladenylate + adenosine(37) in tRNA = N(6)-L-threonylcarbamoyladenosine(37) in tRNA + AMP + H(+). Functionally, required for the formation of a threonylcarbamoyl group on adenosine at position 37 (t(6)A37) in tRNAs that read codons beginning with adenine. Is involved in the transfer of the threonylcarbamoyl moiety of threonylcarbamoyl-AMP (TC-AMP) to the N6 group of A37, together with TsaE and TsaB. TsaD likely plays a direct catalytic role in this reaction. In Alteromonas mediterranea (strain DSM 17117 / CIP 110805 / LMG 28347 / Deep ecotype), this protein is tRNA N6-adenosine threonylcarbamoyltransferase.